The primary structure comprises 350 residues: Aldo-keto reductase 1B (350 aa).

The active-site Proton donor is the Tyr-84. His-146 contributes to the substrate binding site. Residue 244–306 (SPLGSPNRPW…SVTKDRIESN (63 aa)) participates in NADP(+) binding.

It belongs to the aldo/keto reductase family.

It localises to the cytoplasm. The catalysed reaction is an alditol + NADP(+) = an aldose + NADPH + H(+). The enzyme catalyses all-trans-retinol + NADP(+) = all-trans-retinal + NADPH + H(+). It carries out the reaction 9-cis-retinol + NADP(+) = 9-cis-retinal + NADPH + H(+). It catalyses the reaction 13-cis-retinol + NADP(+) = 13-cis-retinal + NADPH + H(+). The catalysed reaction is glycerol + NADP(+) = D-glyceraldehyde + NADPH + H(+). The enzyme catalyses glycerol + NADP(+) = L-glyceraldehyde + NADPH + H(+). It carries out the reaction prenol + NADP(+) = 3-methyl-2-butenal + NADPH + H(+). It catalyses the reaction (E)-hex-2-en-1-ol + NADP(+) = (E)-hex-2-enal + NADPH + H(+). The catalysed reaction is (E,E)-2,4-hexadien-1-ol + NADP(+) = (E,E)-2,4-hexadienal + NADPH + H(+). The enzyme catalyses a 4-hydroxynonen-1-ol + NADP(+) = a 4-hydroxynonenal + NADPH + H(+). It carries out the reaction prostaglandin F2alpha + NADP(+) = prostaglandin H2 + NADPH + H(+). It catalyses the reaction allyl alcohol + NADP(+) = acrolein + NADPH + H(+). The catalysed reaction is pyridine 3-methanol + NADP(+) = pyridine-3-carbaldehyde + NADPH + H(+). The enzyme catalyses 1-hexadecanoyl-2-(5-oxopentanoyl)-sn-glycero-3-phosphocholine + NADPH + H(+) = 1-hexadecanoyl-2-(5-hydroxypentanoyl)-sn-glycero-3-phosphocholine + NADP(+). It carries out the reaction 1-hexadecanoyl-2-(7-oxoheptanoyl)-sn-glycero-3-phosphocholine + NADPH + H(+) = 1-hexadecanoyl-2-(7-hydroxyheptanoyl)-sn-glycero-3-phosphocholine + NADP(+). It catalyses the reaction 1-hexadecanoyl-2-(9-oxononanoyl)-sn-glycero-3-phosphocholine + NADPH + H(+) = 1-hexadecanoyl-2-(9-hydroxynonanoyl)-sn-glycero-3-phosphocholine + NADP(+). The catalysed reaction is 1-hexadecanoyl-2-(5-oxopentanoyl)-sn-glycero-3-phosphoethanolamine + NADPH + H(+) = 1-hexadecanoyl-2-(5-hydroxypentanoyl)-sn-glycero-3-phosphoethanolamine + NADP(+). Catalyzes the NADPH-dependent reduction of a wide variety of carbonyl-containing compounds to their corresponding alcohols. Displays enzymatic activity towards endogenous metabolites such as aromatic and aliphatic aldehydes, ketones, monosaccharides, bile acids and xenobiotics substrates. Key enzyme in the polyol pathway, catalyzes reduction of glucose to sorbitol during hyperglycemia. Reduces steroids and their derivatives and prostaglandins. Through production of prostaglandin F2alpha may regulate the activity of non-muscle myosin II in an autocrine or paracrine fashion; influences border cell and nurse cell stiffness to facilitate border cell cluster migration. Also regulates the cell surface localization of integrins in an autocrine or paracrine fashion; influences border cell adhesion to maintain border cell cluster morphology. In hemocytes, probably contributes to production of sugar alcohols in the hemolymph, which act as alarmins involved in gut-fat body innate immunological communication (GFIC); leads to activation of the imd/Relish signaling pathway in the fat body. This chain is Aldo-keto reductase 1B, found in Drosophila melanogaster (Fruit fly).